We begin with the raw amino-acid sequence, 470 residues long: Uronate isomerase (470 aa).

The protein belongs to the metallo-dependent hydrolases superfamily. Uronate isomerase family.

It carries out the reaction D-glucuronate = D-fructuronate. The catalysed reaction is aldehydo-D-galacturonate = keto-D-tagaturonate. Its pathway is carbohydrate metabolism; pentose and glucuronate interconversion. The chain is Uronate isomerase from Sphingopyxis alaskensis (strain DSM 13593 / LMG 18877 / RB2256) (Sphingomonas alaskensis).